Reading from the N-terminus, the 64-residue chain is Large ribosomal subunit protein uL29 (64 aa).

The protein belongs to the universal ribosomal protein uL29 family.

In Polynucleobacter necessarius subsp. necessarius (strain STIR1), this protein is Large ribosomal subunit protein uL29.